Here is a 1320-residue protein sequence, read N- to C-terminus: Inner centromere protein A (1320 aa).

5 disordered regions span residues 53–75, 426–447, 611–679, 701–877, and 896–1215; these read KNSN…NNIS, QEKQ…QPVV, NEPI…VVPP, EEEE…NTAS, and TKSP…DGDE. Low complexity-rich tracts occupy residues 54 to 75, 429 to 447, and 615 to 640; these read NSNY…NNIS, QQQQ…QPVV, and QQPS…SSSS. A coiled-coil region spans residues 221 to 444; that stretch reads QQNQFQEQHK…KQQEKQQQQQ (224 aa). Residues 653 to 668 are compositionally biased toward polar residues; sequence TIVTSKPTNKVQPQSL. Low complexity predominate over residues 669–679; it reads NSNINNNVVPP. Residues 683–855 are a coiled coil; that stretch reads AAIANKLKKQ…QKKKTVQTIL (173 aa). The span at 701–835 shows a compositional bias: basic and acidic residues; sequence EEEERLRKKQ…QEKEKQEKQK (135 aa). Residues 851 to 863 show a composition bias toward polar residues; it reads VQTILPTPQTPSR. Positions 864–877 are enriched in low complexity; it reads SANNNYDDAANTAS. Composition is skewed to acidic residues over residues 908 to 926 and 934 to 951; these read DDQD…ENSE and QDDS…DSDE. The segment covering 965 to 977 has biased composition (low complexity); the sequence is NKNKNSNNSNNNN. The span at 981–1000 shows a compositional bias: basic and acidic residues; that stretch reads QSRKDKSIVFDSDSLNRNHN. 2 stretches are compositionally biased toward low complexity: residues 1026 to 1040 and 1047 to 1061; these read SNMK…YSNS and SPPS…SSES. Polar residues predominate over residues 1062 to 1071; the sequence is NDCFSPLTPT. The span at 1072–1096 shows a compositional bias: low complexity; it reads NNNKINNNKINNNNSNNNSFNNSNS. Residues 1120-1136 are compositionally biased toward polar residues; that stretch reads SKTSPFLTIRNTPSPLK. The segment covering 1143–1154 has biased composition (low complexity); sequence NMSSASSLSSFD. A compositionally biased stretch (acidic residues) spans 1155–1170; sequence SDNDSDYNDNDIDDGE. Over residues 1175–1187 the composition is skewed to polar residues; that stretch reads PNENFTTPLKNQE. Residues 1188-1198 are compositionally biased toward low complexity; that stretch reads NNNNNNSNNSN. Residues 1199 to 1209 show a composition bias toward polar residues; sequence TQYPIITSPPS.

The protein belongs to the INCENP family. Interacts with aurK.

The protein localises to the chromosome. Its subcellular location is the centromere. The protein resides in the cytoplasm. It is found in the cytoskeleton. It localises to the spindle. The protein localises to the nucleus. Its subcellular location is the cleavage furrow. Functionally, chromosomal passenger protein that seems to be required for chromosome segregation and the onset of cytokinesis during mitosis. Plays a key role in the abscission of daughter cells at the end of cytokinesis and in the establishment or maintenance of a bipolar spindle. The polypeptide is Inner centromere protein A (icpA) (Dictyostelium discoideum (Social amoeba)).